A 356-amino-acid chain; its full sequence is Methionine import ATP-binding protein MetN (356 aa).

Positions 7-250 (IKLDNIDVTF…PRESLTQDFI (244 aa)) constitute an ABC transporter domain. Position 43–50 (43–50 (GYSGAGKS)) interacts with ATP.

The protein belongs to the ABC transporter superfamily. Methionine importer (TC 3.A.1.24) family. As to quaternary structure, the complex is composed of two ATP-binding proteins (MetN), two transmembrane proteins (MetI) and a solute-binding protein (MetQ).

The protein localises to the cell membrane. The enzyme catalyses L-methionine(out) + ATP + H2O = L-methionine(in) + ADP + phosphate + H(+). It carries out the reaction D-methionine(out) + ATP + H2O = D-methionine(in) + ADP + phosphate + H(+). Its function is as follows. Part of the ABC transporter complex MetNIQ involved in methionine import. Responsible for energy coupling to the transport system. In Streptococcus agalactiae serotype III (strain NEM316), this protein is Methionine import ATP-binding protein MetN.